Reading from the N-terminus, the 296-residue chain is MTTPVLNTDFPGLKLAARGKVRDIYDLGETLLIVTTDRISAFDVIMNEGIPHKGYVLTQISAYWFRQMEGIIKNHIISTDVADFPKECQPYADVLAGRSMWVKKAQPLAAECIVRGYISGSGWKDYQSTGAICGIKLPEGLKESDRLPQPIFTPSTKAELGTHDENISFEEMCRICGTEISTKVRDVTLAIYEKARDIADQKGIIIADTKFEYGIYEGELIIIDECMTPDSSRFWPKDSYKPGGPQPSFDKQFLRDYLETLDWGKTAPAPPLPEEIVRKTGEKYMEALVKLTGKGI.

It belongs to the SAICAR synthetase family.

It carries out the reaction 5-amino-1-(5-phospho-D-ribosyl)imidazole-4-carboxylate + L-aspartate + ATP = (2S)-2-[5-amino-1-(5-phospho-beta-D-ribosyl)imidazole-4-carboxamido]succinate + ADP + phosphate + 2 H(+). It functions in the pathway purine metabolism; IMP biosynthesis via de novo pathway; 5-amino-1-(5-phospho-D-ribosyl)imidazole-4-carboxamide from 5-amino-1-(5-phospho-D-ribosyl)imidazole-4-carboxylate: step 1/2. In Geobacter sp. (strain M21), this protein is Phosphoribosylaminoimidazole-succinocarboxamide synthase.